The chain runs to 431 residues: Tyrosine--tRNA ligase (431 aa).

Tyrosine 34 is an L-tyrosine binding site. The 'HIGH' region motif lies at 39 to 48 (PTADSLHIGH). L-tyrosine-binding residues include tyrosine 171 and glutamine 175. The 'KMSKS' region motif lies at 231–235 (KFGKT). Lysine 234 serves as a coordination point for ATP. In terms of domain architecture, S4 RNA-binding spans 353–422 (INVVEALVKT…GKYTILRRGK (70 aa)).

The protein belongs to the class-I aminoacyl-tRNA synthetase family. TyrS type 1 subfamily. As to quaternary structure, homodimer.

Its subcellular location is the cytoplasm. The enzyme catalyses tRNA(Tyr) + L-tyrosine + ATP = L-tyrosyl-tRNA(Tyr) + AMP + diphosphate + H(+). Its function is as follows. Catalyzes the attachment of tyrosine to tRNA(Tyr) in a two-step reaction: tyrosine is first activated by ATP to form Tyr-AMP and then transferred to the acceptor end of tRNA(Tyr). The polypeptide is Tyrosine--tRNA ligase (Neisseria meningitidis serogroup C (strain 053442)).